Reading from the N-terminus, the 365-residue chain is Ribosome biogenesis regulatory protein homolog (365 aa).

Methionine 1 carries the post-translational modification N-acetylmethionine. Serine 5 bears the Phosphoserine mark. Residues lysine 154 and lysine 226 each participate in a glycyl lysine isopeptide (Lys-Gly) (interchain with G-Cter in SUMO2) cross-link. Residues 233–253 (GRFQERLPKEKVPRGSGKKRK) form a disordered region. Residues 235–245 (FQERLPKEKVP) show a composition bias toward basic and acidic residues. Lysine 266 participates in a covalent cross-link: Glycyl lysine isopeptide (Lys-Gly) (interchain with G-Cter in SUMO2). Citrulline is present on arginine 273. The tract at residues 280–365 (PQLDVTRATN…GQRPGGKRRK (86 aa)) is disordered. Over residues 302–325 (KRRKMSQKGKRKGGRQGPGGKRKG) the composition is skewed to basic residues. Gly residues predominate over residues 337-350 (GLGGKMNSGPPGLG). The segment covering 351–365 (GKRKGGQRPGGKRRK) has biased composition (basic residues).

The protein belongs to the RRS1 family. In terms of assembly, component of a hexameric 5S RNP precursor complex, composed of 5S RNA, RRS1, RPF2/BXDC1, RPL5, RPL11 and HEATR3; this complex acts as a precursor for ribosome assembly. Post-translationally, citrullinated by PADI4.

It is found in the nucleus. The protein localises to the nucleolus. Its function is as follows. Involved in ribosomal large subunit assembly. May regulate the localization of the 5S RNP/5S ribonucleoprotein particle to the nucleolus. This Homo sapiens (Human) protein is Ribosome biogenesis regulatory protein homolog (RRS1).